The primary structure comprises 343 residues: N-acetyl-gamma-glutamyl-phosphate reductase (343 aa).

The active site involves Cys-147.

This sequence belongs to the NAGSA dehydrogenase family. Type 1 subfamily.

It is found in the cytoplasm. The enzyme catalyses N-acetyl-L-glutamate 5-semialdehyde + phosphate + NADP(+) = N-acetyl-L-glutamyl 5-phosphate + NADPH + H(+). Its pathway is amino-acid biosynthesis; L-arginine biosynthesis; N(2)-acetyl-L-ornithine from L-glutamate: step 3/4. Catalyzes the NADPH-dependent reduction of N-acetyl-5-glutamyl phosphate to yield N-acetyl-L-glutamate 5-semialdehyde. The protein is N-acetyl-gamma-glutamyl-phosphate reductase of Staphylococcus aureus (strain Mu3 / ATCC 700698).